A 219-amino-acid polypeptide reads, in one-letter code: Cytidylate kinase (219 aa).

21–29 (GPAASGKGT) lines the ATP pocket.

This sequence belongs to the cytidylate kinase family. Type 1 subfamily.

The protein localises to the cytoplasm. The enzyme catalyses CMP + ATP = CDP + ADP. It catalyses the reaction dCMP + ATP = dCDP + ADP. This Rickettsia rickettsii (strain Iowa) protein is Cytidylate kinase.